Consider the following 515-residue polypeptide: 2-isopropylmalate synthase (515 aa).

The region spanning 5–267 (VIIFDTTLRD…DTRINTQEIH (263 aa)) is the Pyruvate carboxyltransferase domain. 4 residues coordinate Mn(2+): D14, H202, H204, and N238. The interval 392–515 (VLDKLSAHST…VADIKNHKHH (124 aa)) is regulatory domain.

The protein belongs to the alpha-IPM synthase/homocitrate synthase family. LeuA type 1 subfamily. In terms of assembly, homodimer. The cofactor is Mn(2+).

Its subcellular location is the cytoplasm. The catalysed reaction is 3-methyl-2-oxobutanoate + acetyl-CoA + H2O = (2S)-2-isopropylmalate + CoA + H(+). Its pathway is amino-acid biosynthesis; L-leucine biosynthesis; L-leucine from 3-methyl-2-oxobutanoate: step 1/4. Its function is as follows. Catalyzes the condensation of the acetyl group of acetyl-CoA with 3-methyl-2-oxobutanoate (2-ketoisovalerate) to form 3-carboxy-3-hydroxy-4-methylpentanoate (2-isopropylmalate). The chain is 2-isopropylmalate synthase from Haemophilus influenzae (strain PittEE).